Here is a 176-residue protein sequence, read N- to C-terminus: Ribosome maturation factor RimM (176 aa).

Residues 97 to 176 form the PRC barrel domain; the sequence is EDEFYWRDLI…QILVDWDPDF (80 aa).

It belongs to the RimM family. As to quaternary structure, binds ribosomal protein uS19.

The protein localises to the cytoplasm. Functionally, an accessory protein needed during the final step in the assembly of 30S ribosomal subunit, possibly for assembly of the head region. Essential for efficient processing of 16S rRNA. May be needed both before and after RbfA during the maturation of 16S rRNA. It has affinity for free ribosomal 30S subunits but not for 70S ribosomes. The sequence is that of Ribosome maturation factor RimM from Shewanella sp. (strain MR-4).